Reading from the N-terminus, the 154-residue chain is Cyclin-dependent protein kinase inhibitor SMR14 (154 aa).

The tract at residues 1 to 111 (MSKIKIFHLF…RPPRKPKAIP (111 aa)) is disordered. Over residues 24–37 (SLLVPSKSDSLDSS) the composition is skewed to low complexity. Residues 74–83 (KWECKDEESP) show a composition bias toward basic and acidic residues.

Functionally, probable cyclin-dependent protein kinase (CDK) inhibitor that functions as a repressor of mitosis in the endoreduplication cell cycle. This is Cyclin-dependent protein kinase inhibitor SMR14 from Arabidopsis thaliana (Mouse-ear cress).